Consider the following 343-residue polypeptide: GTPase Obg (343 aa).

The Obg domain maps to M1–L159. In terms of domain architecture, OBG-type G spans A160 to E334. GTP is bound by residues G166–S173, F191–Y195, D213–G216, N284–D287, and S315–L317. Positions 173 and 193 each coordinate Mg(2+).

It belongs to the TRAFAC class OBG-HflX-like GTPase superfamily. OBG GTPase family. In terms of assembly, monomer. Mg(2+) serves as cofactor.

Its subcellular location is the cytoplasm. Its function is as follows. An essential GTPase which binds GTP, GDP and possibly (p)ppGpp with moderate affinity, with high nucleotide exchange rates and a fairly low GTP hydrolysis rate. Plays a role in control of the cell cycle, stress response, ribosome biogenesis and in those bacteria that undergo differentiation, in morphogenesis control. This Nitrosomonas eutropha (strain DSM 101675 / C91 / Nm57) protein is GTPase Obg.